Reading from the N-terminus, the 145-residue chain is D-aminoacyl-tRNA deacylase (145 aa).

A Gly-cisPro motif, important for rejection of L-amino acids motif is present at residues 137–138 (GP).

It belongs to the DTD family. As to quaternary structure, homodimer.

It localises to the cytoplasm. It catalyses the reaction glycyl-tRNA(Ala) + H2O = tRNA(Ala) + glycine + H(+). The enzyme catalyses a D-aminoacyl-tRNA + H2O = a tRNA + a D-alpha-amino acid + H(+). Functionally, an aminoacyl-tRNA editing enzyme that deacylates mischarged D-aminoacyl-tRNAs. Also deacylates mischarged glycyl-tRNA(Ala), protecting cells against glycine mischarging by AlaRS. Acts via tRNA-based rather than protein-based catalysis; rejects L-amino acids rather than detecting D-amino acids in the active site. By recycling D-aminoacyl-tRNA to D-amino acids and free tRNA molecules, this enzyme counteracts the toxicity associated with the formation of D-aminoacyl-tRNA entities in vivo and helps enforce protein L-homochirality. This Idiomarina loihiensis (strain ATCC BAA-735 / DSM 15497 / L2-TR) protein is D-aminoacyl-tRNA deacylase.